Consider the following 300-residue polypeptide: MNPHYARLVTLAAVSATAVALVLFVMKVFAWWHTGSVSLLASLVDSLVDIAASLVNLLVVRYSLQPADTEHAFGHGKAESLAALAQSMFISGSALFLILTGLQHSLEPQTLHAPEVGMWVTLIALVATLLLVSFQRWVVKHTHSQAVRADMLHYQSDLLMNGAILVALALSWKGITRADSLFALGIGVYILYSALRMGYDAVQSLLDRALPDEEHRAIAEVIVNWPGIRGAHALRTRRSGPTRFIQLHLEMDDALPLAEAHQIADDLEQALRKQFPGADIIIHQDPVSAVPENQRGRLTA.

The next 4 membrane-spanning stretches (helical) occupy residues 11 to 31 (LAAV…VFAW), 40 to 60 (LASL…LLVV), 81 to 101 (LAAL…ILTG), and 114 to 134 (PEVG…LVSF). Zn(2+)-binding residues include aspartate 45 and aspartate 49. Residues histidine 153 and aspartate 157 each contribute to the Zn(2+) site. 2 helical membrane passes run 156–176 (SDLL…KGIT) and 182–202 (FALG…YDAV).

This sequence belongs to the cation diffusion facilitator (CDF) transporter (TC 2.A.4) family. FieF subfamily. As to quaternary structure, homodimer.

It localises to the cell inner membrane. The enzyme catalyses Zn(2+)(in) + H(+)(out) = Zn(2+)(out) + H(+)(in). It catalyses the reaction Cd(2+)(in) + H(+)(out) = Cd(2+)(out) + H(+)(in). The catalysed reaction is Fe(2+)(in) + H(+)(out) = Fe(2+)(out) + H(+)(in). Its function is as follows. Divalent metal cation transporter which exports Zn(2+), Cd(2+) and possibly Fe(2+). May be involved in zinc and iron detoxification by efflux. In Pectobacterium atrosepticum (strain SCRI 1043 / ATCC BAA-672) (Erwinia carotovora subsp. atroseptica), this protein is Cation-efflux pump FieF.